A 120-amino-acid chain; its full sequence is Crustacean hyperglycemic hormones 1 (120 aa).

Residues 1–24 (MIAFRAVWSALLASLLLLLLAPSA) form the signal peptide. Intrachain disulfides connect Cys-53-Cys-89, Cys-69-Cys-85, and Cys-72-Cys-98. Val-118 carries the post-translational modification Valine amide.

Belongs to the arthropod CHH/MIH/GIH/VIH hormone family. In terms of tissue distribution, produced by the medulla terminalis X-organ in the eyestalks and transported to the sinus gland where they are stored and released.

It is found in the secreted. Functionally, hormone found in the sinus gland of isopods and decapods which controls the blood sugar level. Has a secretagogue action over the amylase released from the midgut gland. May act as a stress hormone and may be involved in the control of molting and reproduction. This is Crustacean hyperglycemic hormones 1 from Penaeus japonicus (Kuruma prawn).